The primary structure comprises 122 residues: Ribonuclease P protein component (122 aa).

The protein belongs to the RnpA family. As to quaternary structure, consists of a catalytic RNA component (M1 or rnpB) and a protein subunit.

The enzyme catalyses Endonucleolytic cleavage of RNA, removing 5'-extranucleotides from tRNA precursor.. RNaseP catalyzes the removal of the 5'-leader sequence from pre-tRNA to produce the mature 5'-terminus. It can also cleave other RNA substrates such as 4.5S RNA. The protein component plays an auxiliary but essential role in vivo by binding to the 5'-leader sequence and broadening the substrate specificity of the ribozyme. The polypeptide is Ribonuclease P protein component (Roseiflexus castenholzii (strain DSM 13941 / HLO8)).